A 218-amino-acid polypeptide reads, in one-letter code: MSPILGYWKIKGLVQPTRLLLEYLEEKYEEHLYERDEGDKWRNKKFELGLEFPNLPYYIDGDVKLTQSMAIIRYIADKHNMLGGCPKERAEISMLEGAVLDIRYGVSRIAYSKDFETLKVDFLSKLPEMLKMFEDRLCHKTYLNGDHVTHPDFMLYDALDVVLYMDPMCLDAFPKLVCFKKRIEAIPQIDKYLKSSKYIAWPLQGWQATFGGGDHPPK.

Residues 2-83 (SPILGYWKIK…YIADKHNMLG (82 aa)) enclose the GST N-terminal domain. Glutathione contacts are provided by residues 7–8 (YW), 41–45 (WRNKK), 54–55 (NL), and 67–68 (QS). The GST C-terminal domain occupies 85–203 (CPKERAEISM…KSSKYIAWPL (119 aa)). Tyr111 contributes to the substrate binding site.

Belongs to the GST superfamily. Mu family. In terms of assembly, homodimer.

It carries out the reaction RX + glutathione = an S-substituted glutathione + a halide anion + H(+). Functionally, conjugation of reduced glutathione to a wide number of exogenous and endogenous hydrophobic electrophiles. GST isoenzymes appear to play a central role in the parasite detoxification system. Other functions are also suspected including a role in increasing the solubility of haematin in the parasite gut. The polypeptide is Glutathione S-transferase class-mu 26 kDa isozyme (Schistosoma japonicum (Blood fluke)).